The following is a 498-amino-acid chain: ATP synthase subunit beta, chloroplastic (498 aa).

An ATP-binding site is contributed by 172–179; the sequence is GGAGVGKT.

The protein belongs to the ATPase alpha/beta chains family. In terms of assembly, F-type ATPases have 2 components, CF(1) - the catalytic core - and CF(0) - the membrane proton channel. CF(1) has five subunits: alpha(3), beta(3), gamma(1), delta(1), epsilon(1). CF(0) has four main subunits: a(1), b(1), b'(1) and c(9-12).

It localises to the plastid. It is found in the chloroplast thylakoid membrane. The catalysed reaction is ATP + H2O + 4 H(+)(in) = ADP + phosphate + 5 H(+)(out). Produces ATP from ADP in the presence of a proton gradient across the membrane. The catalytic sites are hosted primarily by the beta subunits. This chain is ATP synthase subunit beta, chloroplastic, found in Phaseolus vulgaris (Kidney bean).